A 136-amino-acid chain; its full sequence is Small ribosomal subunit protein uS9 (136 aa).

The segment covering 103-116 (PLKTEGHLSRDPRA) has biased composition (basic and acidic residues). The tract at residues 103–136 (PLKTEGHLSRDPRAKERRKYGLKKARKAPQFSKR) is disordered. The span at 117 to 136 (KERRKYGLKKARKAPQFSKR) shows a compositional bias: basic residues.

It belongs to the universal ribosomal protein uS9 family.

The chain is Small ribosomal subunit protein uS9 (rpsI) from Prochlorococcus marinus (strain SARG / CCMP1375 / SS120).